The primary structure comprises 74 residues: Exodeoxyribonuclease 7 small subunit (74 aa).

The protein belongs to the XseB family. As to quaternary structure, heterooligomer composed of large and small subunits.

It localises to the cytoplasm. The enzyme catalyses Exonucleolytic cleavage in either 5'- to 3'- or 3'- to 5'-direction to yield nucleoside 5'-phosphates.. Functionally, bidirectionally degrades single-stranded DNA into large acid-insoluble oligonucleotides, which are then degraded further into small acid-soluble oligonucleotides. The sequence is that of Exodeoxyribonuclease 7 small subunit from Neisseria meningitidis serogroup C / serotype 2a (strain ATCC 700532 / DSM 15464 / FAM18).